A 231-amino-acid polypeptide reads, in one-letter code: Orotidine 5'-phosphate decarboxylase (231 aa).

Residues D11, K34, 61–70 (DLKLHDIPNT), T117, R179, Q188, G208, and R209 each bind substrate. Residue K63 is the Proton donor of the active site.

It belongs to the OMP decarboxylase family. Type 1 subfamily. As to quaternary structure, homodimer.

The enzyme catalyses orotidine 5'-phosphate + H(+) = UMP + CO2. It functions in the pathway pyrimidine metabolism; UMP biosynthesis via de novo pathway; UMP from orotate: step 2/2. Catalyzes the decarboxylation of orotidine 5'-monophosphate (OMP) to uridine 5'-monophosphate (UMP). This is Orotidine 5'-phosphate decarboxylase from Streptococcus thermophilus (strain ATCC BAA-491 / LMD-9).